We begin with the raw amino-acid sequence, 385 residues long: Succinate--CoA ligase [ADP-forming] subunit beta (385 aa).

The ATP-grasp domain occupies 9–244 (KEILRKYGVP…QDEEDPLETR (236 aa)). ATP-binding positions include Lys-46, 53-55 (GRG), Glu-99, Cys-102, and Glu-107. 2 residues coordinate Mg(2+): Asn-199 and Asp-213. Substrate contacts are provided by residues Asn-264 and 321–323 (GIM).

This sequence belongs to the succinate/malate CoA ligase beta subunit family. In terms of assembly, heterotetramer of two alpha and two beta subunits. Mg(2+) is required as a cofactor.

The enzyme catalyses succinate + ATP + CoA = succinyl-CoA + ADP + phosphate. It catalyses the reaction GTP + succinate + CoA = succinyl-CoA + GDP + phosphate. It participates in carbohydrate metabolism; tricarboxylic acid cycle; succinate from succinyl-CoA (ligase route): step 1/1. In terms of biological role, succinyl-CoA synthetase functions in the citric acid cycle (TCA), coupling the hydrolysis of succinyl-CoA to the synthesis of either ATP or GTP and thus represents the only step of substrate-level phosphorylation in the TCA. The beta subunit provides nucleotide specificity of the enzyme and binds the substrate succinate, while the binding sites for coenzyme A and phosphate are found in the alpha subunit. The polypeptide is Succinate--CoA ligase [ADP-forming] subunit beta (Rickettsia bellii (strain RML369-C)).